Here is a 289-residue protein sequence, read N- to C-terminus: Heme oxygenase 1 (289 aa).

Polar residues predominate over residues 1–12; it reads MERPQPDSSMPQ. The interval 1-24 is disordered; that stretch reads MERPQPDSSMPQDLSEALKEATKE. Over 1 to 266 the chain is Cytoplasmic; sequence MERPQPDSSM…KPQPSVLSQA (266 aa). Heme b contacts are provided by Lys19, His26, Tyr135, and Arg184. The tract at residues 239 to 261 is disordered; the sequence is RRAGSKVQDLAPTKASRGKPQPS. Ser243 carries the post-translational modification Phosphoserine. Residues 267–289 traverse the membrane as a helical; Anchor for type IV membrane protein segment; that stretch reads PLLRWVLTLSFLVATVAVGLYAM.

Belongs to the heme oxygenase family. In terms of assembly, homodimer and higher order homooligomer. Oligomerization is crucial for its stability and function in the endoplasmic reticulum. Interacts with FLVCR2; this interaction is potentiated in the presence of heme. In terms of processing, a soluble form arises by proteolytic removal of the membrane anchor.

The protein resides in the endoplasmic reticulum membrane. It carries out the reaction heme b + 3 reduced [NADPH--hemoprotein reductase] + 3 O2 = biliverdin IXalpha + CO + Fe(2+) + 3 oxidized [NADPH--hemoprotein reductase] + 3 H2O + H(+). With respect to regulation, inhibited by metalloporphyrins such as Sn-, Co-, Mn- and Zn-protoporphyrins. Catalyzes the oxidative cleavage of heme at the alpha-methene bridge carbon, released as carbon monoxide (CO), to generate biliverdin IXalpha, while releasing the central heme iron chelate as ferrous iron. Affords protection against programmed cell death and this cytoprotective effect relies on its ability to catabolize free heme and prevent it from sensitizing cells to undergo apoptosis. Its function is as follows. Catalyzes the oxidative cleavage of heme at the alpha-methene bridge carbon, released as carbon monoxide (CO), to generate biliverdin IXalpha, while releasing the central heme iron chelate as ferrous iron. This is Heme oxygenase 1 (HMOX1) from Bos taurus (Bovine).